Reading from the N-terminus, the 125-residue chain is Large ribosomal subunit protein bL12 (125 aa).

The protein belongs to the bacterial ribosomal protein bL12 family. As to quaternary structure, homodimer. Part of the ribosomal stalk of the 50S ribosomal subunit. Forms a multimeric L10(L12)X complex, where L10 forms an elongated spine to which 2 to 4 L12 dimers bind in a sequential fashion. Binds GTP-bound translation factors.

Functionally, forms part of the ribosomal stalk which helps the ribosome interact with GTP-bound translation factors. Is thus essential for accurate translation. This Rickettsia conorii (strain ATCC VR-613 / Malish 7) protein is Large ribosomal subunit protein bL12.